A 223-amino-acid chain; its full sequence is ATP-dependent dethiobiotin synthetase BioD (223 aa).

Position 16 (Thr-16) interacts with Mg(2+). Lys-37 is a catalytic residue. Ser-41 lines the substrate pocket. The Mg(2+) site is built by Asp-50 and Glu-111. Residues Asp-50, 111-114 (EGAG), and 171-172 (NR) each bind ATP.

It belongs to the dethiobiotin synthetase family. In terms of assembly, homodimer. Mg(2+) is required as a cofactor.

The protein localises to the cytoplasm. The catalysed reaction is (7R,8S)-7,8-diammoniononanoate + CO2 + ATP = (4R,5S)-dethiobiotin + ADP + phosphate + 3 H(+). The protein operates within cofactor biosynthesis; biotin biosynthesis; biotin from 7,8-diaminononanoate: step 1/2. Catalyzes a mechanistically unusual reaction, the ATP-dependent insertion of CO2 between the N7 and N8 nitrogen atoms of 7,8-diaminopelargonic acid (DAPA, also called 7,8-diammoniononanoate) to form a ureido ring. The chain is ATP-dependent dethiobiotin synthetase BioD from Anaeromyxobacter dehalogenans (strain 2CP-1 / ATCC BAA-258).